Here is a 766-residue protein sequence, read N- to C-terminus: MQRAGSSGARGECDISGAGRLRLEQAARLGGRTVHTSPGGGLGARQAAGMSAKERPKGKVIKDSVTLLPCFYFVELPILASSVVSLYFLELTDVFKPVHSGFSCYDRSLSMPYIEPTQEAIPFLMLLSLAFAGPAITIMVGEGILYCCLSKRRNGAGLEPNINAGGCNFNSFLRRAVRFVGVHVFGLCSTALITDIIQLSTGYQAPYFLTVCKPNYTSLNVSCKENSYIVEDICSGSDLTVINSGRKSFPSQHATLAAFAAVYVSMYFNSTLTDSSKLLKPLLVFTFIICGIICGLTRITQYKNHPVDVYCGFLIGGGIALYLGLYAVGNFLPSEDSMLQHRDALRSLTDLNQDPSRVLSAKNGSSGDGIAHTEGILNRNHRDASSLTNLKRANADVEIITPRSPMGKESMVTFSNTLPRANTPSVEDPVRRNASIHASMDSARSKQLLTQWKSKNESRKMSLQVMDTEPEGQSPPRSIEMRSSSEPSRVGVNGDHHVPGNQYLKIQPGTVPGCNNSMPGGPRVSIQSRPGSSQLVHIPEETQENISTSPKSSSARAKWLKAAEKTVACNRSNNQPRIMQVIAMSKQQGVLQSSPKNAEGSTVTCTGSIRYKTLTDHEPSGIVRVEAHPENNRPIIQIPSSTEGEGSGSWKWKAPEKSSLRQTYELNDLNRDSESCESLKDSFGSGDRKRSNIDSNEHHHHGITTIRVTPVEGSEIGSETLSVSSSRDSTLRRKGNIILIPERSNSPENTRNIFYKGTSPTRAYKD.

Serine 37 bears the Phosphoserine mark. A run of 3 helical transmembrane segments spans residues 68 to 88 (LPCF…SLYF), 120 to 140 (AIPF…TIMV), and 179 to 199 (FVGV…IIQL). Asparagine 215 and asparagine 220 each carry an N-linked (GlcNAc...) asparagine glycan. Residues 248–268 (SFPSQHATLAAFAAVYVSMYF) traverse the membrane as a helical segment. A glycan (N-linked (GlcNAc...) asparagine) is linked at asparagine 269. A run of 2 helical transmembrane segments spans residues 277–297 (KLLK…CGLT) and 309–329 (VYCG…YAVG). Phosphoserine is present on serine 347. N-linked (GlcNAc...) asparagine glycosylation occurs at asparagine 363. Residue serine 386 is modified to Phosphoserine. The N-linked (GlcNAc...) asparagine glycan is linked to asparagine 433. At serine 439 the chain carries Phosphoserine. The tract at residues 454–494 (SKNESRKMSLQVMDTEPEGQSPPRSIEMRSSSEPSRVGVNG) is disordered. The N-linked (GlcNAc...) asparagine glycan is linked to asparagine 456. Serine 462 and serine 474 each carry phosphoserine. Residues asparagine 515, asparagine 545, and asparagine 570 are each glycosylated (N-linked (GlcNAc...) asparagine). Serine 608 carries the post-translational modification Phosphoserine. Disordered stretches follow at residues 634-654 (PIIQ…KWKA), 672-701 (DSES…HHHH), and 742-766 (ERSN…AYKD). Positions 672-697 (DSESCESLKDSFGSGDRKRSNIDSNE) are enriched in basic and acidic residues. Positions 743-752 (RSNSPENTRN) are enriched in polar residues.

The protein belongs to the PA-phosphatase related phosphoesterase family. In terms of processing, O-glycosylated. Probably at Ser-347. Brain-specific, it is exclusively expressed in neurons (at protein level).

Its subcellular location is the postsynaptic density membrane. Functionally, postsynaptic density membrane protein that indirectly regulates glutamatergic synaptic transmission through lysophosphatidic acid (LPA)-mediated signaling pathways. Binds lysophosphatidic acid (LPA) and mediates its internalization into cells. Could act as receptor or a transporter of this lipid at the post-synaptic membrane. Modulates lysophosphatidic acid (LPA) activity in neuron axonal outgrowth during development by attenuating phospholipid-induced axon collapse. The sequence is that of Phospholipid phosphatase-related protein type 4 from Mus musculus (Mouse).